A 509-amino-acid chain; its full sequence is 2,3-bisphosphoglycerate-independent phosphoglycerate mutase (509 aa).

2 residues coordinate Mn(2+): Asp-13 and Ser-63. Catalysis depends on Ser-63, which acts as the Phosphoserine intermediate. Substrate is bound by residues His-124, 154–155 (RD), Arg-186, Arg-192, 261–264 (RPDR), and Lys-335. Positions 400, 404, 441, 442, and 459 each coordinate Mn(2+).

This sequence belongs to the BPG-independent phosphoglycerate mutase family. As to quaternary structure, monomer. Mn(2+) serves as cofactor.

It carries out the reaction (2R)-2-phosphoglycerate = (2R)-3-phosphoglycerate. The protein operates within carbohydrate degradation; glycolysis; pyruvate from D-glyceraldehyde 3-phosphate: step 3/5. Its function is as follows. Catalyzes the interconversion of 2-phosphoglycerate and 3-phosphoglycerate. This is 2,3-bisphosphoglycerate-independent phosphoglycerate mutase from Desulforudis audaxviator (strain MP104C).